Consider the following 239-residue polypeptide: MRQSGRKSNQLRPISLELSPLINAEGSCLIKIGNTHVMCSATCETTVPPFLRGQNQGWVTAEYGMLPGSTSQRIKREAAQGKQGGRTQEIQRLIGRNMRCVIDLKKLGERQIIIDCDVINADGGTRTAAITGSYVALHLAIRSLMKKRILKVNPLISQIAAVSCGIYKGEAILDLDYLEDSDAEVDSNFVFAGNGNLIEVQGTAEKEPFSEEQFIAMLKLAKGGAAELFKLQNQVLLGA.

Residues Arg-86 and 124–126 each bind phosphate; that span reads GTR.

This sequence belongs to the RNase PH family. In terms of assembly, homohexameric ring arranged as a trimer of dimers.

The enzyme catalyses tRNA(n+1) + phosphate = tRNA(n) + a ribonucleoside 5'-diphosphate. Functionally, phosphorolytic 3'-5' exoribonuclease that plays an important role in tRNA 3'-end maturation. Removes nucleotide residues following the 3'-CCA terminus of tRNAs; can also add nucleotides to the ends of RNA molecules by using nucleoside diphosphates as substrates, but this may not be physiologically important. Probably plays a role in initiation of 16S rRNA degradation (leading to ribosome degradation) during starvation. In Rickettsia felis (strain ATCC VR-1525 / URRWXCal2) (Rickettsia azadi), this protein is Ribonuclease PH.